Consider the following 315-residue polypeptide: MKHLVIATRGSKLALWQAEHIKSLIETEHAGKVDVSLKIIKTKGDIILDVPLAKVGGKGLFVKEIEEALLDGSADLAVHSMKDVPMELPEGLFLGCIPEREEPSDTLLSVRYASLDALPHGARVGTSSLRRQSQLLALRPDLDIISLRGNVDTRLRKLMDGEFDAIVMATAGLKRLGLSAPHHEVLAPPRFLPAVGQGALGIEFREDRADLRDMLAFLDHRPTRIRVEAERGFLAGLEGGCQVPIAGHAVMTGDDDFRIEGLVADLKGERVIRRTLEGTGANARNRGLELASQVLADGAAEILDEVYASGAADRQ.

Residue C241 is modified to S-(dipyrrolylmethanemethyl)cysteine.

This sequence belongs to the HMBS family. Monomer. The cofactor is dipyrromethane.

The enzyme catalyses 4 porphobilinogen + H2O = hydroxymethylbilane + 4 NH4(+). It participates in porphyrin-containing compound metabolism; protoporphyrin-IX biosynthesis; coproporphyrinogen-III from 5-aminolevulinate: step 2/4. Its function is as follows. Tetrapolymerization of the monopyrrole PBG into the hydroxymethylbilane pre-uroporphyrinogen in several discrete steps. The polypeptide is Porphobilinogen deaminase (Nitratidesulfovibrio vulgaris (strain DP4) (Desulfovibrio vulgaris)).